Here is a 344-residue protein sequence, read N- to C-terminus: Intraflagellar transport protein 46 (344 aa).

The segment covering 1–16 (MDDSMDYPDRDGDDLD) has biased composition (acidic residues). The disordered stretch occupies residues 1 to 100 (MDDSMDYPDR…IANSDEAPPG (100 aa)). The segment covering 18–30 (FQGTARSQVVQNQ) has biased composition (polar residues).

It belongs to the IFT46 family. In terms of assembly, component of the IFT complex B, the core composed of IFT25, IFT27, IFT46, IFT52, IFT74, IFT81 and IFT88 as well as associated subunits IFT20, IFT57, IFT80 and IFT172. Interacts with IFT25, IFT52, IFT70, IFT88 and DAW1.

Its subcellular location is the cytoplasm. It is found in the cytoskeleton. The protein localises to the cilium basal body. It localises to the cell projection. The protein resides in the cilium. Forms part of a complex involved in intraflagellar transport (IFT), the bi-directional movement of particles required for the assembly, maintenance and functioning of primary cilia. Plays a role in maintaining IFT complex B stability. This chain is Intraflagellar transport protein 46, found in Chlamydomonas reinhardtii (Chlamydomonas smithii).